The following is a 172-amino-acid chain: Protein/nucleic acid deglycase 2 (172 aa).

Residues 3-171 form the PfpI endopeptidase domain; that stretch reads KKIAVLITDE…FNREALRLLG (169 aa). The Nucleophile role is filled by Cys-104.

Belongs to the peptidase C56 family. In terms of assembly, exists in monomeric, trimeric, and hexameric forms.

The protein localises to the cytoplasm. It carries out the reaction N(omega)-(1-hydroxy-2-oxopropyl)-L-arginyl-[protein] + H2O = lactate + L-arginyl-[protein] + H(+). The enzyme catalyses N(6)-(1-hydroxy-2-oxopropyl)-L-lysyl-[protein] + H2O = lactate + L-lysyl-[protein] + H(+). It catalyses the reaction S-(1-hydroxy-2-oxopropyl)-L-cysteinyl-[protein] + H2O = lactate + L-cysteinyl-[protein] + H(+). The catalysed reaction is N(omega)-(1-hydroxy-2-oxoethyl)-L-arginyl-[protein] + H2O = L-arginyl-[protein] + glycolate + H(+). It carries out the reaction N(6)-(1-hydroxy-2-oxoethyl)-L-lysyl-[protein] + H2O = glycolate + L-lysyl-[protein] + H(+). The enzyme catalyses S-(1-hydroxy-2-oxoethyl)-L-cysteinyl-[protein] + H2O = glycolate + L-cysteinyl-[protein] + H(+). It catalyses the reaction N(2)-(1-hydroxy-2-oxopropyl)-dGTP + H2O = lactate + dGTP + H(+). The catalysed reaction is N(2)-(1-hydroxy-2-oxopropyl)-GTP + H2O = lactate + GTP + H(+). It carries out the reaction N(2)-(1-hydroxy-2-oxopropyl)-GDP + H2O = lactate + GDP + H(+). The enzyme catalyses N(2)-(1-hydroxy-2-oxopropyl)-GMP + H2O = lactate + GMP + H(+). It catalyses the reaction N(2)-(1-hydroxy-2-oxoethyl)-dGTP + H2O = dGTP + glycolate + H(+). The catalysed reaction is N(2)-(1-hydroxy-2-oxoethyl)-GTP + H2O = glycolate + GTP + H(+). It carries out the reaction N(2)-(1-hydroxy-2-oxoethyl)-GDP + H2O = glycolate + GDP + H(+). The enzyme catalyses N(2)-(1-hydroxy-2-oxoethyl)-GMP + H2O = glycolate + GMP + H(+). It catalyses the reaction an N(2)-(1-hydroxy-2-oxopropyl)-guanosine in RNA + H2O = a guanosine in RNA + lactate + H(+). The catalysed reaction is an N(2)-(1-hydroxy-2-oxopropyl)-2'-deoxyguanosine in DNA + H2O = a 2'-deoxyguanosine in DNA + lactate + H(+). It carries out the reaction an N(2)-(1-hydroxy-2-oxoethyl)-guanosine in RNA + H2O = a guanosine in RNA + glycolate + H(+). The enzyme catalyses an N(2)-(1-hydroxy-2-oxoethyl)-2'-deoxyguanosine in DNA + H2O = a 2'-deoxyguanosine in DNA + glycolate + H(+). Glyoxalase activity is inhibited by zinc ions at pH 7.0. Functionally, protein and nucleotide deglycase that catalyzes the deglycation of the Maillard adducts formed between amino groups of proteins or nucleotides and reactive carbonyl groups of glyoxals. Thus, functions as a protein deglycase that repairs methylglyoxal- and glyoxal-glycated proteins, and releases repaired proteins and lactate or glycolate, respectively. Deglycates cysteine, arginine and lysine residues in proteins, and thus reactivates these proteins by reversing glycation by glyoxals. Is able to repair glycated serum albumin, collagen, glyceraldehyde-3-phosphate dehydrogenase, and fructose biphosphate aldolase. Acts on early glycation intermediates (hemithioacetals and aminocarbinols), preventing the formation of advanced glycation endproducts (AGE) that cause irreversible damage. Also functions as a nucleotide deglycase able to repair glycated guanine in the free nucleotide pool (GTP, GDP, GMP, dGTP) and in DNA and RNA. Is thus involved in a major nucleotide repair system named guanine glycation repair (GG repair), dedicated to reversing methylglyoxal and glyoxal damage via nucleotide sanitization and direct nucleic acid repair. In vitro, prevents acrylamide formation in asparagine/glyoxal and asparagine/sugar mixtures at 55 degrees Celsius, likely by degrading asparagine/glyoxal Maillard adducts formed at high temperatures. Also displays an apparent glyoxalase activity that in fact reflects its deglycase activity. Is a general stress protein; is required for the protection of bacterial cells against many environmental stresses, including oxidative, thermal, osmotic, UV, and pH stresses. And plays an important role in protection against electrophile/carbonyl stress. This Escherichia coli (strain K12) protein is Protein/nucleic acid deglycase 2 (yhbO).